Here is a 432-residue protein sequence, read N- to C-terminus: Nuclear pore complex-interacting protein family member B9 (432 aa).

2 disordered regions span residues 260–280 and 353–420; these read RMGR…NSLS and SPLP…LRTR. Over residues 270-280 the composition is skewed to polar residues; that stretch reads QQHSITDNSLS. Residues 374-402 show a composition bias toward basic and acidic residues; it reads EVEKPPKPKRWRVDEVEQSPKPKRQREAE. The span at 408 to 420 shows a compositional bias: basic residues; it reads KPKRRRLSKLRTR.

It belongs to the NPIP family.

In Homo sapiens (Human), this protein is Nuclear pore complex-interacting protein family member B9 (NPIPB9).